Consider the following 492-residue polypeptide: Trypanothione reductase (492 aa).

35 to 52 provides a ligand contact to FAD; the sequence is DVQTHHGPPHYAALGGTC. Cys52 and Cys57 are disulfide-bonded. His461 acts as the Proton acceptor in catalysis.

This sequence belongs to the class-I pyridine nucleotide-disulfide oxidoreductase family. As to quaternary structure, homodimer. Requires FAD as cofactor.

Its subcellular location is the cytoplasm. It catalyses the reaction trypanothione + NADP(+) = trypanothione disulfide + NADPH + H(+). In terms of biological role, trypanothione is the parasite analog of glutathione; this enzyme is the equivalent of glutathione reductase. This chain is Trypanothione reductase (TPR), found in Trypanosoma brucei brucei.